The primary structure comprises 467 residues: Bifunctional enzyme LpxC/FabZ (467 aa).

The UDP-3-O-acyl-N-acetylglucosamine deacetylase stretch occupies residues 1-306; sequence MLIHQRTLQN…FVKQLKKYAD (306 aa). Residues His79, His264, and Asp268 each coordinate Zn(2+). The Proton donor role is filled by His291. A 3-hydroxyacyl-[acyl-carrier-protein] dehydratase region spans residues 307–467; the sequence is RNKLARQYQH…LMATVMEKKN (161 aa). The active site involves His370.

This sequence in the N-terminal section; belongs to the LpxC family. The protein in the C-terminal section; belongs to the thioester dehydratase family. Zn(2+) is required as a cofactor.

The protein resides in the cytoplasm. The catalysed reaction is a UDP-3-O-[(3R)-3-hydroxyacyl]-N-acetyl-alpha-D-glucosamine + H2O = a UDP-3-O-[(3R)-3-hydroxyacyl]-alpha-D-glucosamine + acetate. It carries out the reaction a (3R)-hydroxyacyl-[ACP] = a (2E)-enoyl-[ACP] + H2O. It participates in glycolipid biosynthesis; lipid IV(A) biosynthesis; lipid IV(A) from (3R)-3-hydroxytetradecanoyl-[acyl-carrier-protein] and UDP-N-acetyl-alpha-D-glucosamine: step 2/6. Its function is as follows. Catalyzes the hydrolysis of UDP-3-O-myristoyl-N-acetylglucosamine to form UDP-3-O-myristoylglucosamine and acetate, the committed step in lipid A biosynthesis. In terms of biological role, involved in unsaturated fatty acids biosynthesis. Catalyzes the dehydration of short chain beta-hydroxyacyl-ACPs and long chain saturated and unsaturated beta-hydroxyacyl-ACPs. The chain is Bifunctional enzyme LpxC/FabZ (lpxC/fabZ) from Chlorobaculum tepidum (strain ATCC 49652 / DSM 12025 / NBRC 103806 / TLS) (Chlorobium tepidum).